The chain runs to 451 residues: MSAFDKHQISTFRFVRCALDAQTGVATLVYAFDQGPELVETVAVPGAPFALGGANATAVQQALQLLHLIAGVSYFKAAVPPNIAIDSYSIDAETAALVQSVYLHGLGEFAYRNGLQLHGKIRFPVAAQAAAAAPALGLRVHALVAIGGGKDSLVSIEALRHAGVDQTVSWIGGSQLIRACAERTGLPVLNIGRVLAPELFELNRQGAWNGHIPVTAVNSAILVLAALLNGVDQVVFSNERSASYGSQIPGTGEVNHQWSKGWAFEQAFGDYVQRHVAADLRYYSLLRPLSELAVARQFAKTDRYDAHFSSCNRNFHIMGERPVHRWCGVCPKCHFVFLALAPFMPKTRLVNIFGRNLLDDATQAGGYDALLEFQDHKPFECVGEGRESRTAMAVLASRAEWKEDAVVKRFIRDIQPQLDPNDLQVEPLMAIEGEHRIPPALWERVRANFAV.

Belongs to the MurL family.

It carries out the reaction UDP-N-acetyl-alpha-D-muramoyl-L-alanyl-L-glutamate + ATP + H2O = UDP-N-acetyl-alpha-D-muramoyl-L-alanyl-D-glutamate + AMP + diphosphate + H(+). It functions in the pathway cell wall biogenesis; peptidoglycan biosynthesis. Functionally, cell wall formation. Catalyzes epimerization of the terminal L-glutamate in UDP-N-acetyl-alpha-D-muramoyl-L-alanyl-L-glutamate. The chain is UDP-N-acetyl-alpha-D-muramoyl-L-alanyl-L-glutamate epimerase from Xanthomonas oryzae pv. oryzae (strain MAFF 311018).